The sequence spans 258 residues: UPF0246 protein CGSHiGG_08495 (258 aa).

The protein belongs to the UPF0246 family.

This chain is UPF0246 protein CGSHiGG_08495, found in Haemophilus influenzae (strain PittGG).